The following is a 96-amino-acid chain: Co-chaperonin GroES (96 aa).

The protein belongs to the GroES chaperonin family. As to quaternary structure, heptamer of 7 subunits arranged in a ring. Interacts with the chaperonin GroEL.

The protein resides in the cytoplasm. Together with the chaperonin GroEL, plays an essential role in assisting protein folding. The GroEL-GroES system forms a nano-cage that allows encapsulation of the non-native substrate proteins and provides a physical environment optimized to promote and accelerate protein folding. GroES binds to the apical surface of the GroEL ring, thereby capping the opening of the GroEL channel. In Vibrio campbellii (strain ATCC BAA-1116), this protein is Co-chaperonin GroES.